A 422-amino-acid polypeptide reads, in one-letter code: Protein TEX1 (422 aa).

5 WD repeats span residues 61–100, 158–197, 207–246, 251–290, and 293–332; these read ITPN…FDKS, GSKT…SSVC, EDND…LEVC, AHTG…CELI, and DLNS…LLHS. The segment at 388–422 is disordered; that stretch reads KRRKNNGGGNNHNKRTSKNTDRIGKDRPSRFNSKK. Residues 405 to 416 show a composition bias toward basic and acidic residues; sequence KNTDRIGKDRPS.

It belongs to the THOC3 family. In terms of assembly, component of the transcription/export (TREX) complex and the THO complex.

It localises to the nucleus. Functionally, component of the TREX complex, which operates in coupling transcription elongation to mRNA export. The polypeptide is Protein TEX1 (TEX1) (Saccharomyces cerevisiae (strain ATCC 204508 / S288c) (Baker's yeast)).